Here is a 506-residue protein sequence, read N- to C-terminus: Lysine--tRNA ligase (506 aa).

Mg(2+) contacts are provided by Glu416 and Glu423.

This sequence belongs to the class-II aminoacyl-tRNA synthetase family. In terms of assembly, homodimer. The cofactor is Mg(2+).

The protein resides in the cytoplasm. It catalyses the reaction tRNA(Lys) + L-lysine + ATP = L-lysyl-tRNA(Lys) + AMP + diphosphate. This Bordetella parapertussis (strain 12822 / ATCC BAA-587 / NCTC 13253) protein is Lysine--tRNA ligase.